The primary structure comprises 434 residues: UDP-N-acetylglucosamine 1-carboxyvinyltransferase 1 (434 aa).

22-23 is a phosphoenolpyruvate binding site; the sequence is KN. Residue Arg-93 participates in UDP-N-acetyl-alpha-D-glucosamine binding. Cys-117 (proton donor) is an active-site residue. 2-(S-cysteinyl)pyruvic acid O-phosphothioketal is present on Cys-117. Residues 122–126, Asp-306, and Val-328 each bind UDP-N-acetyl-alpha-D-glucosamine; that span reads RPIDQ.

This sequence belongs to the EPSP synthase family. MurA subfamily.

It is found in the cytoplasm. The enzyme catalyses phosphoenolpyruvate + UDP-N-acetyl-alpha-D-glucosamine = UDP-N-acetyl-3-O-(1-carboxyvinyl)-alpha-D-glucosamine + phosphate. Its pathway is cell wall biogenesis; peptidoglycan biosynthesis. In terms of biological role, cell wall formation. Adds enolpyruvyl to UDP-N-acetylglucosamine. The chain is UDP-N-acetylglucosamine 1-carboxyvinyltransferase 1 from Bacillus anthracis.